The chain runs to 550 residues: Gamma-aminobutyric acid receptor subunit beta (550 aa).

The N-terminal stretch at 1–24 is a signal peptide; sequence MRRSKTRRIFHVSITLLLVSTIFC. Residues 25-264 are Extracellular-facing; the sequence is QNGTKPHNNS…FQLRRSVGYF (240 aa). Residues Asn-26, Asn-32, Asn-33, Asn-45, Asn-53, and Asn-193 are each glycosylated (N-linked (GlcNAc...) asparagine). Cys-180 and Cys-194 are joined by a disulfide. A run of 3 helical transmembrane segments spans residues 265–285, 292–311, and 324–344; these read IFQT…SFWI, ARVA…STGV, and IDIY…EYAA. At 345 to 527 the chain is on the cytoplasmic side; that stretch reads VNYSYWGRER…DVNLIDKYSR (183 aa). The tract at residues 405 to 465 is disordered; that stretch reads AMSTSNTAAQ…TTSLKGARPH (61 aa). Residues 406 to 421 show a composition bias toward polar residues; that stretch reads MSTSNTAAQNNNFEST. The chain crosses the membrane as a helical span at residues 528-548; sequence VVFPVCFIVFNLFYWSYYMMV.

This sequence belongs to the ligand-gated ion channel (TC 1.A.9) family. Gamma-aminobutyric acid receptor (TC 1.A.9.5) subfamily.

It localises to the postsynaptic cell membrane. The protein localises to the cell membrane. Functionally, GABA, an inhibitory neurotransmitter, mediates neuronal inhibition by binding to the GABA receptor and opening an integral chloride channel. In Caenorhabditis elegans, this protein is Gamma-aminobutyric acid receptor subunit beta (gab-1).